We begin with the raw amino-acid sequence, 749 residues long: Cytosolic phospholipase A2 (749 aa).

A phospholipid binding region spans residues 1-178 (MSFIDPYQHI…MKKLLGPKNS (178 aa)). At S2 the chain carries Phosphoserine. Positions 6–122 (PYQHIIVEHQ…KVGEKKEVPF (117 aa)) constitute a C2 domain. Ca(2+) contacts are provided by D40, T41, D43, N65, D93, A94, and N95. Residues 140–740 (SCPDLRFSMA…SNVEARRFFN (601 aa)) enclose the PLA2c domain. S228 acts as the Nucleophile in catalysis. T268 carries the post-translational modification Phosphothreonine. The segment at 409–457 (GSQSRGSTMEEELENITTKHIVSNDSSDSDDESHEPKGTENEDAGSDYQ) is disordered. 3 positions are modified to phosphoserine: S434, S435, and S437. A Phosphoserine; by MAPK modification is found at S505. S515 is subject to Phosphoserine. K541 participates in a covalent cross-link: Glycyl lysine isopeptide (Lys-Gly) (interchain with G-Cter in SUMO2). D549 functions as the Proton acceptor in the catalytic mechanism. K606 participates in a covalent cross-link: Glycyl lysine isopeptide (Lys-Gly) (interchain with G-Cter in SUMO2). 2 positions are modified to phosphoserine: S727 and S729.

In terms of assembly, interacts with KAT5. Post-translationally, phosphorylated at both Ser-505 and Ser-727 in response to mitogenic stimuli.

It localises to the cytoplasm. The protein localises to the golgi apparatus membrane. Its subcellular location is the nucleus envelope. The catalysed reaction is a 1,2-diacyl-sn-glycero-3-phosphocholine + H2O = a 1-acyl-sn-glycero-3-phosphocholine + a fatty acid + H(+). The enzyme catalyses a 1-O-alkyl-2-acyl-sn-glycero-3-phosphocholine + H2O = a 1-O-alkyl-sn-glycero-3-phosphocholine + a fatty acid + H(+). It carries out the reaction a 1-acyl-sn-glycero-3-phosphocholine + H2O = sn-glycerol 3-phosphocholine + a fatty acid + H(+). It catalyses the reaction 1-hexadecanoyl-2-(5Z,8Z,11Z,14Z-eicosatetraenoyl)-sn-glycero-3-phosphocholine + H2O = 1-hexadecanoyl-sn-glycero-3-phosphocholine + (5Z,8Z,11Z,14Z)-eicosatetraenoate + H(+). The catalysed reaction is 1,2-di-(5Z,8Z,11Z,14Z-eicosatetraenoyl)-sn-glycero-3-phosphocholine + H2O = 1-(5Z,8Z,11Z,14Z-eicosatetraenoyl)-sn-glycero-3-phosphocholine + (5Z,8Z,11Z,14Z)-eicosatetraenoate + H(+). The enzyme catalyses 1-octadecanoyl-2-(5Z,8Z,11Z,14Z-eicosatetraenoyl)-sn-glycero-3-phosphocholine + H2O = 1-octadecanoyl-sn-glycero-3-phosphocholine + (5Z,8Z,11Z,14Z)-eicosatetraenoate + H(+). It carries out the reaction 1-hexadecanoyl-2-(9Z,12Z-octadecadienoyl)-sn-glycero-3-phosphocholine + H2O = (9Z,12Z)-octadecadienoate + 1-hexadecanoyl-sn-glycero-3-phosphocholine + H(+). It catalyses the reaction 1-octadecanoyl-2-(9Z,12Z,15Z-octadecatrienoyl)-sn-glycero-3-phosphocholine + H2O = (9Z,12Z,15Z)-octadecatrienoate + 1-octadecanoyl-sn-glycero-3-phosphocholine + H(+). The catalysed reaction is 1-(5Z,8Z,11Z,14Z-eicosatetraenoyl)-2-hexadecanoyl-sn-glycero-3-phosphocholine + H2O = 1-(5Z,8Z,11Z,14Z-eicosatetraenoyl)-sn-glycero-3-phosphocholine + hexadecanoate + H(+). The enzyme catalyses 1-O-hexadecyl-2-(5Z,8Z,11Z,14Z)-eicosatetraenoyl-sn-glycero-3-phosphocholine + H2O = 1-O-hexadecyl-sn-glycero-3-phosphocholine + (5Z,8Z,11Z,14Z)-eicosatetraenoate + H(+). It carries out the reaction 1,2-di-(9Z-octadecenoyl)-sn-glycero-3-phospho-(1'-sn-glycerol) + H2O = 1-(9Z-octadecenoyl)-sn-glycero-3-phospho-(1'-sn-glycerol) + (9Z)-octadecenoate + H(+). It catalyses the reaction 1-octadecanoyl-2-(5Z,8Z,11Z,14Z-eicosatetraenoyl)-sn-glycero-3-phosphate + H2O = 1-octadecanoyl-sn-glycero-3-phosphate + (5Z,8Z,11Z,14Z)-eicosatetraenoate + H(+). The catalysed reaction is 1-hexadecanoyl-sn-glycero-3-phosphocholine + H2O = sn-glycerol 3-phosphocholine + hexadecanoate + H(+). The enzyme catalyses 2-(prostaglandin E2)-sn-glycero-3-phosphoethanolamine + H2O = sn-glycero-3-phosphoethanolamine + prostaglandin E2 + H(+). It carries out the reaction 2-[(15S)-hydroxy-(5Z,8Z,11Z,13E)-eicosatetraenoyl]-sn-glycero-3-phosphocholine + H2O = (15S)-hydroxy-(5Z,8Z,11Z,13E)-eicosatetraenoate + sn-glycerol 3-phosphocholine + H(+). It catalyses the reaction 2-[(15R)-hydroxy-(5Z,8Z,11Z,13E)-eicosatetraenoyl]-sn-glycero-3-phosphocholine + H2O = (15R)-hydroxy-(5Z,8Z,11Z,13E)-eicosatetraenoate + sn-glycerol 3-phosphocholine + H(+). The catalysed reaction is 2-(prostaglandin E2)-sn-glycero-3-phosphocholine + H2O = prostaglandin E2 + sn-glycerol 3-phosphocholine + H(+). The enzyme catalyses 2-[(11R)-hydroxy-(5Z,8Z,12E,14Z)-eicosatetraenoyl]-sn-glycero-3-phosphocholine + H2O = (11R)-hydroxy-(5Z,8Z,12E,14Z)-eicosatetraenoate + sn-glycerol 3-phosphocholine + H(+). It carries out the reaction 1-(5Z,8Z,11Z,14Z-eicosatetraenoyl)-2-O-hexadecyl-sn-glycero-3-phosphocholine + H2O = 2-O-hexadecyl-sn-glycero-3-phosphocholine + (5Z,8Z,11Z,14Z)-eicosatetraenoate + H(+). It catalyses the reaction 1-octadecanoyl-2-(5Z,8Z,11Z,14Z-eicosatetraenoyl)-sn-glycero-3-phosphocholine + glycerol = 1-(5Z,8Z,11Z,14Z-eicosatetraenoyl)-glycerol + 1-octadecanoyl-sn-glycero-3-phosphocholine. The catalysed reaction is 1-octadecanoyl-2-(9Z,12Z,15Z-octadecatrienoyl)-sn-glycero-3-phosphocholine + glycerol = 1-(9Z,12Z,15Z-octadecatrienoyl)-glycerol + 1-octadecanoyl-sn-glycero-3-phosphocholine. It participates in membrane lipid metabolism; glycerophospholipid metabolism. It functions in the pathway lipid metabolism; arachidonate metabolism. The protein operates within lipid metabolism; prostaglandin biosynthesis. Its pathway is lipid metabolism; leukotriene B4 biosynthesis. Its activity is regulated as follows. Activated by cytosolic calcium, which is necessary for binding to membrane lipids. Activated by phosphorylation in response to mitogenic stimuli. Its function is as follows. Has primarily calcium-dependent phospholipase and lysophospholipase activities, with a major role in membrane lipid remodeling and biosynthesis of lipid mediators of the inflammatory response. Plays an important role in embryo implantation and parturition through its ability to trigger prostanoid production. Preferentially hydrolyzes the ester bond of the fatty acyl group attached at sn-2 position of phospholipids (phospholipase A2 activity). Selectively hydrolyzes sn-2 arachidonoyl group from membrane phospholipids, providing the precursor for eicosanoid biosynthesis via the cyclooxygenase pathway. In an alternative pathway of eicosanoid biosynthesis, hydrolyzes sn-2 fatty acyl chain of eicosanoid lysophopholipids to release free bioactive eicosanoids. Hydrolyzes the ester bond of the fatty acyl group attached at sn-1 position of phospholipids (phospholipase A1 activity) only if an ether linkage rather than an ester linkage is present at the sn-2 position. This hydrolysis is not stereospecific. Has calcium-independent phospholipase A2 and lysophospholipase activities in the presence of phosphoinositides. Has O-acyltransferase activity. Catalyzes the transfer of fatty acyl chains from phospholipids to a primary hydroxyl group of glycerol (sn-1 or sn-3), potentially contributing to monoacylglycerol synthesis. In Pongo abelii (Sumatran orangutan), this protein is Cytosolic phospholipase A2 (PLA2G4A).